A 277-amino-acid polypeptide reads, in one-letter code: Small ribosomal subunit protein mS23 (277 aa).

Disordered stretches follow at residues 48–85 (APSH…KKPS) and 232–277 (LAAF…GPPI). Acidic residues predominate over residues 244-269 (ESGESEDEIPLIEEEDAIGASEESET).

The protein belongs to the mitochondrion-specific ribosomal protein mS23 family. Component of the mitochondrial small ribosomal subunit.

It localises to the mitochondrion. In Ajellomyces capsulatus (strain NAm1 / WU24) (Darling's disease fungus), this protein is Small ribosomal subunit protein mS23 (RSM25).